We begin with the raw amino-acid sequence, 204 residues long: Outer-membrane lipoprotein carrier protein (204 aa).

Positions M1–A21 are cleaved as a signal peptide.

Belongs to the LolA family. Monomer.

The protein localises to the periplasm. Participates in the translocation of lipoproteins from the inner membrane to the outer membrane. Only forms a complex with a lipoprotein if the residue after the N-terminal Cys is not an aspartate (The Asp acts as a targeting signal to indicate that the lipoprotein should stay in the inner membrane). In Histophilus somni (strain 129Pt) (Haemophilus somnus), this protein is Outer-membrane lipoprotein carrier protein.